The following is a 209-amino-acid chain: Uracil phosphoribosyltransferase (209 aa).

5-phospho-alpha-D-ribose 1-diphosphate is bound by residues Arg79, Arg104, and Asp131–Ser139. Residues Ile194 and Gly199–Ala201 each bind uracil. Asp200 provides a ligand contact to 5-phospho-alpha-D-ribose 1-diphosphate.

It belongs to the UPRTase family. Requires Mg(2+) as cofactor.

The catalysed reaction is UMP + diphosphate = 5-phospho-alpha-D-ribose 1-diphosphate + uracil. It participates in pyrimidine metabolism; UMP biosynthesis via salvage pathway; UMP from uracil: step 1/1. With respect to regulation, allosterically activated by GTP. Functionally, catalyzes the conversion of uracil and 5-phospho-alpha-D-ribose 1-diphosphate (PRPP) to UMP and diphosphate. The chain is Uracil phosphoribosyltransferase from Clostridium perfringens (strain SM101 / Type A).